The chain runs to 413 residues: 3-isopropylmalate dehydratase large subunit (413 aa).

Positions 293, 353, and 356 each coordinate [4Fe-4S] cluster.

Belongs to the aconitase/IPM isomerase family. LeuC type 2 subfamily. Heterodimer of LeuC and LeuD. The cofactor is [4Fe-4S] cluster.

The enzyme catalyses (2R,3S)-3-isopropylmalate = (2S)-2-isopropylmalate. The protein operates within amino-acid biosynthesis; L-leucine biosynthesis; L-leucine from 3-methyl-2-oxobutanoate: step 2/4. In terms of biological role, catalyzes the isomerization between 2-isopropylmalate and 3-isopropylmalate, via the formation of 2-isopropylmaleate. This Picrophilus torridus (strain ATCC 700027 / DSM 9790 / JCM 10055 / NBRC 100828 / KAW 2/3) protein is 3-isopropylmalate dehydratase large subunit.